The sequence spans 206 residues: Putative cryptic phosphonate transport system permease protein PhnE1 (206 aa).

Transmembrane regions (helical) follow at residues Trp-30–Ala-50, Ile-92–Ala-112, and Met-137–Ala-157.

In terms of assembly, if the reading frame is restored, the complex is composed of two ATP-binding proteins (PhnC), two transmembrane proteins (PhnE) and a solute-binding protein (PhnD).

It is found in the cell inner membrane. N-terminal fragment of the PhnE protein, part of a phosphonate usage operon that is cryptic in K12 strains. Growth of K12 strains on phosphonate can be observed when it is used as the sole phosphorus source after a 60 hour lag period, suggesting the operon is activated. An intact PhnE in strain B is (AC A0A140NFA3). Part of the binding-protein-dependent transport system for phosphonates; probably responsible for the translocation of the substrate across the membrane. This chain is Putative cryptic phosphonate transport system permease protein PhnE1 (phnE1), found in Escherichia coli (strain K12).